Here is a 1794-residue protein sequence, read N- to C-terminus: Protein TIC 214 (1794 aa).

The next 6 helical transmembrane spans lie at 23–43 (VVVG…SYLF), 64–84 (FIMG…HLAL), 87–107 (PHTI…WNNH), 124–144 (LSIQ…HFIL), 172–192 (VGWL…LFWI), and 218–238 (ILSI…PSPI). Positions 244 to 307 (KETSETGETE…REGVNGKEKT (64 aa)) are disordered. The span at 248–258 (ETGETEEETDV) shows a compositional bias: acidic residues. Composition is skewed to basic and acidic residues over residues 259–276 (EIER…KEGS) and 286–307 (SEEK…KEKT).

Belongs to the TIC214 family. As to quaternary structure, part of the Tic complex.

It localises to the plastid. The protein resides in the chloroplast inner membrane. Involved in protein precursor import into chloroplasts. May be part of an intermediate translocation complex acting as a protein-conducting channel at the inner envelope. The polypeptide is Protein TIC 214 (Amborella trichopoda).